We begin with the raw amino-acid sequence, 206 residues long: Small ribosomal subunit protein uS4A (206 aa).

In terms of domain architecture, S4 RNA-binding spans M98–N163.

The protein belongs to the universal ribosomal protein uS4 family. As to quaternary structure, part of the 30S ribosomal subunit. Contacts protein S5. The interaction surface between S4 and S5 is involved in control of translational fidelity.

In terms of biological role, one of the primary rRNA binding proteins, it binds directly to 16S rRNA where it nucleates assembly of the body of the 30S subunit. Its function is as follows. With S5 and S12 plays an important role in translational accuracy. In Clostridium perfringens (strain ATCC 13124 / DSM 756 / JCM 1290 / NCIMB 6125 / NCTC 8237 / Type A), this protein is Small ribosomal subunit protein uS4A.